A 458-amino-acid polypeptide reads, in one-letter code: Bifunctional protein GlmU (458 aa).

The tract at residues 1–230 (MSLPTYSKLN…EWQVAGINSK (230 aa)) is pyrophosphorylase. Residues 14 to 17 (LAAG), K28, Q79, and 84 to 85 (GT) contribute to the UDP-N-acetyl-alpha-D-glucosamine site. Residue D108 participates in Mg(2+) binding. 4 residues coordinate UDP-N-acetyl-alpha-D-glucosamine: G141, E155, N170, and N228. N228 is a binding site for Mg(2+). The tract at residues 231–251 (QDLAALERVYQGRYAARLLAK) is linker. Positions 252–458 (GVTLADPSRI…NWKRPEKVKK (207 aa)) are N-acetyltransferase. UDP-N-acetyl-alpha-D-glucosamine is bound by residues R334 and K352. H364 serves as the catalytic Proton acceptor. UDP-N-acetyl-alpha-D-glucosamine contacts are provided by Y367 and N378. Acetyl-CoA is bound by residues A381, 387-388 (NY), S406, A424, and R441.

It in the N-terminal section; belongs to the N-acetylglucosamine-1-phosphate uridyltransferase family. The protein in the C-terminal section; belongs to the transferase hexapeptide repeat family. Homotrimer. Mg(2+) is required as a cofactor.

It localises to the cytoplasm. It carries out the reaction alpha-D-glucosamine 1-phosphate + acetyl-CoA = N-acetyl-alpha-D-glucosamine 1-phosphate + CoA + H(+). The enzyme catalyses N-acetyl-alpha-D-glucosamine 1-phosphate + UTP + H(+) = UDP-N-acetyl-alpha-D-glucosamine + diphosphate. Its pathway is nucleotide-sugar biosynthesis; UDP-N-acetyl-alpha-D-glucosamine biosynthesis; N-acetyl-alpha-D-glucosamine 1-phosphate from alpha-D-glucosamine 6-phosphate (route II): step 2/2. It participates in nucleotide-sugar biosynthesis; UDP-N-acetyl-alpha-D-glucosamine biosynthesis; UDP-N-acetyl-alpha-D-glucosamine from N-acetyl-alpha-D-glucosamine 1-phosphate: step 1/1. It functions in the pathway bacterial outer membrane biogenesis; LPS lipid A biosynthesis. Catalyzes the last two sequential reactions in the de novo biosynthetic pathway for UDP-N-acetylglucosamine (UDP-GlcNAc). The C-terminal domain catalyzes the transfer of acetyl group from acetyl coenzyme A to glucosamine-1-phosphate (GlcN-1-P) to produce N-acetylglucosamine-1-phosphate (GlcNAc-1-P), which is converted into UDP-GlcNAc by the transfer of uridine 5-monophosphate (from uridine 5-triphosphate), a reaction catalyzed by the N-terminal domain. In Methylobacillus flagellatus (strain ATCC 51484 / DSM 6875 / VKM B-1610 / KT), this protein is Bifunctional protein GlmU.